We begin with the raw amino-acid sequence, 385 residues long: Guanine nucleotide-binding protein alpha-5 subunit (385 aa).

G2 carries N-myristoyl glycine lipidation. C6 carries the S-palmitoyl cysteine lipid modification. A G-alpha domain is found at 32–385 (RKIKMLLLGI…NKNIETLSLE (354 aa)). The segment at 35 to 48 (KMLLLGISDSGKST) is G1 motif. GTP contacts are provided by residues 40-47 (GISDSGKS), 174-180 (IHMRQTT), 199-203 (DVGGQ), 298-301 (NKID), and A357. 2 residues coordinate Mg(2+): S47 and T180. The interval 172-180 (DLIHMRQTT) is G2 motif. Residues 195-204 (IRLIDVGGQK) are G3 motif. The interval 294–301 (MLFLNKID) is G4 motif. A G5 motif region spans residues 355-360 (TQATIT).

It belongs to the G-alpha family. As to quaternary structure, g proteins are composed of 3 units; alpha, beta and gamma. The alpha chain contains the guanine nucleotide binding site.

Guanine nucleotide-binding proteins (G proteins) are involved as modulators or transducers in various transmembrane signaling systems. This Caenorhabditis briggsae protein is Guanine nucleotide-binding protein alpha-5 subunit (gpa-5).